The sequence spans 820 residues: Protein phosphatase 1 regulatory subunit 29 (820 aa).

The N-terminal stretch at 1 to 22 (MLRLGLCAAALLCVCRPGAVRA) is a signal peptide. Residues 23–397 (DCWLIEGDKG…APSTSTTTHY (375 aa)) lie on the Extracellular side of the membrane. An N-linked (GlcNAc...) asparagine glycan is attached at Asn-54. LRR repeat units follow at residues 56-77 (TVHD…SLNR), 80-101 (NLTD…AFLG), 104-125 (SLQV…MLRG), 128-149 (RLQF…AFSE), and 152-173 (SLIS…TFAS). 3 N-linked (GlcNAc...) asparagine glycosylation sites follow: Asn-80, Asn-85, and Asn-117. Residues 185–247 (NPFNCECDLF…ITVLQAKCRN (63 aa)) enclose the LRRCT domain. N-linked (GlcNAc...) asparagine glycosylation is found at Asn-205 and Asn-247. Positions 250-294 (LPARPVSHPTPYSTDAQREPDENSGFNPDEILSVEPPASSTTDAS) are disordered. Residues 292–379 (DASAGPAIKL…FNHTCLTFTT (88 aa)) enclose the Fibronectin type-III domain. A helical membrane pass occupies residues 398-418 (IMTILGCLFGMVIVLGAVYYC). Residues 419–820 (LRKRRMQEEK…WKGVSAQQKL (402 aa)) lie on the Cytoplasmic side of the membrane. 2 disordered regions span residues 508–527 (GAGG…LENG) and 589–612 (SATG…SSHH). Residues Ser-619, Ser-668, and Ser-672 each carry the phosphoserine modification. The disordered stretch occupies residues 654–677 (TGLAKGDSKYIEKGSPLNSPLDRL).

Interacts with PPP1CA.

Its subcellular location is the membrane. Its function is as follows. Inhibits phosphatase activity of protein phosphatase 1 (PP1) complexes. The polypeptide is Protein phosphatase 1 regulatory subunit 29 (ELFN2) (Homo sapiens (Human)).